Reading from the N-terminus, the 588-residue chain is MSNASDHVDVLIIGAGPAGLTTANSFNGSNCRVRLIDWKPAPLETGRADGLKSISLEVLDSFGIGDRVLNDCQPCEEIVLWNPGKDGVIARTMTIPDKVEELGQIERVMVENLYRHKTVQVNWNTQPVRLHIAPVTKDEPEAHPLTITVQNKETLGQETIRAKYVVGADGAHSWLRKYLNIGFSGDVTDSTWGVMNLVPKTDFPDIRKVFVVHSRAGTVMGVPREDKLVRLYISMDGGNRHTSIDAKSITAENLLQAARAILAPYRLDAARIPWWSAYCVGQRVADEFARHNRIFLAGDAVHTHSPKAGQGMNTSIQDGYNIGWKLRYCLEQKASPALLSTYQTERRPIAQALIDFDRKYLESFTRRDITHQEFLEAYLAGQRFTTGIQIQYPPSLIVTAKHLHAPSHPLATNLAPGKRLPDFQMVNQSDAVPIQAYHRFTSDGRFRLLVFPGDISQALAFGRFSRLGDWLTSHLPPSSGLEIITIHGARRADVELMDLHPAFRPWSDEEGWNYWTVYADDDSYHKGHGHVYERCGISKEDGVLVLLRPDGYISLIASFDETHELIDFFDGLQSGPRTVPQPERRANL.

FAD is bound by residues 9 to 38, 17 to 18, 37 to 39, 45 to 50, Y232, 289 to 299, D299, and 309 to 313; these read DVLI…LIDW, PA, DWK, TGRADG, ARHNRIFLAGD, and GQGMN. Residues D49 and Y232 each coordinate substrate.

The protein belongs to the PheA/TfdB FAD monooxygenase family. Homodimer. FAD is required as a cofactor.

The protein operates within secondary metabolite biosynthesis. In terms of biological role, phenol 2-monooxygenase; part of the gene cluster that mediates the biosynthesis of the isoquinoline alkaloids fumisoquin A, fumisoquin B and fumisoquin C; as well as small amounts of fumipyrrole as a shunt metabolite. The products of the cluster lead to a brown coloration and are important for growth and conidiation. The nonribosomal peptide synthetase-like protein fsqF, which lacks a canonical condensation domain, is required for addition of a serine-derived dehydroalanine moiety to activated tyrosine but is not essential for the subsequent steps leading to isoquinoline formation. A different enzyme, most likely the ATP-grasp enzyme fsqD, is responsible for activation of tyrosine. Three additional enzymes encoded by the fsq cluster, the N-methyltransferase fsqC, the phenol 2-monooxygenase fsqG and the FAD-dependent oxidase fsqB, catalyze the formation of the isoquinoline ring system in the fumisoquins. FsqB converts the fspF thiolation domain-bound (2S,4S,5S)-2-amino-6-(3,4-dihydroxyphenyl)-4-hydroxy-5-(methylamino)hexanoyl into isoquinoline. The cyclization most likely proceeds via a two-step mechanism, beginning with FAD-dependent oxidation of the methyl group to an iminium species followed by electrophilic attack on the deprotonated phenol. The polypeptide is Phenol 2-monooxygenase fsqG (Aspergillus fumigatus (strain ATCC MYA-4609 / CBS 101355 / FGSC A1100 / Af293) (Neosartorya fumigata)).